A 465-amino-acid polypeptide reads, in one-letter code: A-type ATP synthase subunit B (465 aa).

It belongs to the ATPase alpha/beta chains family. As to quaternary structure, has multiple subunits with at least A(3), B(3), C, D, E, F, H, I and proteolipid K(x).

The protein localises to the cell membrane. In terms of biological role, component of the A-type ATP synthase that produces ATP from ADP in the presence of a proton gradient across the membrane. The B chain is a regulatory subunit. The protein is A-type ATP synthase subunit B of Thermococcus kodakarensis (strain ATCC BAA-918 / JCM 12380 / KOD1) (Pyrococcus kodakaraensis (strain KOD1)).